Consider the following 185-residue polypeptide: Elongation factor P (185 aa).

Belongs to the elongation factor P family.

The protein resides in the cytoplasm. It participates in protein biosynthesis; polypeptide chain elongation. Functionally, involved in peptide bond synthesis. Stimulates efficient translation and peptide-bond synthesis on native or reconstituted 70S ribosomes in vitro. Probably functions indirectly by altering the affinity of the ribosome for aminoacyl-tRNA, thus increasing their reactivity as acceptors for peptidyl transferase. The protein is Elongation factor P of Lactococcus lactis subsp. cremoris (strain MG1363).